A 426-amino-acid chain; its full sequence is Tol-Pal system protein TolB (426 aa).

The N-terminal stretch at 1–25 (MNAMSRISRRIFLALALSLAGLAQA) is a signal peptide.

This sequence belongs to the TolB family. As to quaternary structure, the Tol-Pal system is composed of five core proteins: the inner membrane proteins TolA, TolQ and TolR, the periplasmic protein TolB and the outer membrane protein Pal. They form a network linking the inner and outer membranes and the peptidoglycan layer.

It is found in the periplasm. In terms of biological role, part of the Tol-Pal system, which plays a role in outer membrane invagination during cell division and is important for maintaining outer membrane integrity. In Dechloromonas aromatica (strain RCB), this protein is Tol-Pal system protein TolB.